Here is a 116-residue protein sequence, read N- to C-terminus: Putative RNase MJ0125 (116 aa).

Active-site residues include arginine 76 and histidine 81. An RX(4)HXY motif motif is present at residues 76 to 83 (RDKLIHQY). Tyrosine 83 carries the O-di-AMP-tyrosine modification.

This sequence belongs to the HepT RNase toxin family. As to quaternary structure, homodimer, probably forms a complex with cognate antitoxin MJ0126. In terms of processing, modified by cognate antitoxin MJ0126; probably at least 2 successive AMPylation events occur on Tyr-83.

Functionally, probable toxic component of a putative type VII toxin-antitoxin (TA) system, probably an RNase. Probably neutralized by cognate antitoxin MJ0126. Neutralization may be due to AMPylation by MJ0126. The chain is Putative RNase MJ0125 from Methanocaldococcus jannaschii (strain ATCC 43067 / DSM 2661 / JAL-1 / JCM 10045 / NBRC 100440) (Methanococcus jannaschii).